Here is an 812-residue protein sequence, read N- to C-terminus: G patch domain-containing protein 1 homolog (812 aa).

Positions 1-42 are disordered; the sequence is MNRKKLAAYGQEFEDDDEEGSSVSKKPTQIHEEIATDEKGKR. Positions 29–40 are enriched in basic and acidic residues; sequence QIHEEIATDEKG. Positions 145–191 constitute a G-patch domain; that stretch reads SNSIGVRMLRSMGWREGRGIGLANVKQKQKRGGESSEAQFDREQASK. Disordered regions lie at residues 384 to 416 and 584 to 812; these read ANEVEKRDNERGGGEAEEDRDRRQRNRIEFPDE and NEIE…EEKK. Residues 586 to 609 show a composition bias toward basic and acidic residues; sequence IEMRERLLKSRAQRGAEEKKRNQS. 2 stretches are compositionally biased toward acidic residues: residues 610-630 and 653-668; these read DDDDEKEYDDKDSDEEEENEA and DGADSDESNSEDEEAE. Over residues 669–720 the composition is skewed to basic and acidic residues; the sequence is EKERQEILKKREEDLKRRREIVEKKEEENRKRVEKELKELENRDLLRVSKQQ. The span at 761–794 shows a compositional bias: basic residues; the sequence is MKKKKKDKKEKEKKKKSKKSKKSKKEKKTKRKHS. The span at 800–812 shows a compositional bias: acidic residues; the sequence is DSGDNSDGWEEKK.

Belongs to the GPATCH1 family.

The sequence is that of G patch domain-containing protein 1 homolog from Caenorhabditis elegans.